A 194-amino-acid polypeptide reads, in one-letter code: Imidazoleglycerol-phosphate dehydratase (194 aa).

The protein belongs to the imidazoleglycerol-phosphate dehydratase family.

The protein resides in the cytoplasm. The catalysed reaction is D-erythro-1-(imidazol-4-yl)glycerol 3-phosphate = 3-(imidazol-4-yl)-2-oxopropyl phosphate + H2O. The protein operates within amino-acid biosynthesis; L-histidine biosynthesis; L-histidine from 5-phospho-alpha-D-ribose 1-diphosphate: step 6/9. The sequence is that of Imidazoleglycerol-phosphate dehydratase from Ruminiclostridium cellulolyticum (strain ATCC 35319 / DSM 5812 / JCM 6584 / H10) (Clostridium cellulolyticum).